The primary structure comprises 208 residues: Ribosomal RNA large subunit methyltransferase E (208 aa).

Residues Gly63, Trp65, Asp83, Asp99, and Asp124 each contribute to the S-adenosyl-L-methionine site. Catalysis depends on Lys164, which acts as the Proton acceptor.

Belongs to the class I-like SAM-binding methyltransferase superfamily. RNA methyltransferase RlmE family.

It is found in the cytoplasm. The enzyme catalyses uridine(2552) in 23S rRNA + S-adenosyl-L-methionine = 2'-O-methyluridine(2552) in 23S rRNA + S-adenosyl-L-homocysteine + H(+). Specifically methylates the uridine in position 2552 of 23S rRNA at the 2'-O position of the ribose in the fully assembled 50S ribosomal subunit. The protein is Ribosomal RNA large subunit methyltransferase E of Blochmanniella pennsylvanica (strain BPEN).